A 678-amino-acid polypeptide reads, in one-letter code: Catalase (678 aa).

Basic and acidic residues predominate over residues 1-26 (MSNEREMQNKKDQQLESFRVEDEGKK). The disordered stretch occupies residues 1-32 (MSNEREMQNKKDQQLESFRVEDEGKKLTTNQG). Catalysis depends on residues H75 and N148. Residue Y362 coordinates heme.

Belongs to the catalase family. HPII subfamily. Heme serves as cofactor.

It is found in the cytoplasm. It catalyses the reaction 2 H2O2 = O2 + 2 H2O. In terms of biological role, decomposes hydrogen peroxide into water and oxygen; serves to protect cells from the toxic effects of hydrogen peroxide. This chain is Catalase (katE), found in Alkalihalophilus pseudofirmus (strain ATCC BAA-2126 / JCM 17055 / OF4) (Bacillus pseudofirmus).